A 157-amino-acid polypeptide reads, in one-letter code: Transcriptional regulator MraZ (157 aa).

2 SpoVT-AbrB domains span residues 7-52 (TYTM…AGGN) and 83-126 (SETL…EPER).

Belongs to the MraZ family. As to quaternary structure, forms oligomers.

Its subcellular location is the cytoplasm. It localises to the nucleoid. In Xanthobacter autotrophicus (strain ATCC BAA-1158 / Py2), this protein is Transcriptional regulator MraZ.